The following is a 123-amino-acid chain: Prismalin-14 (123 aa).

A signal peptide spans 1–16 (MRSLLVLLALAACASA).

Prismatic layer of shell (at protein level). Expressed primarily in the mantle with highest level in the mantle edge and lower level in the mantle pallium.

Its subcellular location is the secreted. May be involved in calcification of the prismatic layer of the shell. The sequence is that of Prismalin-14 from Margaritifera margaritifera (Freshwater pearl mussel).